Reading from the N-terminus, the 211-residue chain is Thiamine-phosphate synthase (211 aa).

4-amino-2-methyl-5-(diphosphooxymethyl)pyrimidine-binding positions include 39-43 (QLREK) and asparagine 71. Positions 72 and 91 each coordinate Mg(2+). Serine 110 contributes to the 4-amino-2-methyl-5-(diphosphooxymethyl)pyrimidine binding site. 136-138 (TAT) contacts 2-[(2R,5Z)-2-carboxy-4-methylthiazol-5(2H)-ylidene]ethyl phosphate. Lysine 139 contacts 4-amino-2-methyl-5-(diphosphooxymethyl)pyrimidine. Residues alanine 167 and 187-188 (VS) each bind 2-[(2R,5Z)-2-carboxy-4-methylthiazol-5(2H)-ylidene]ethyl phosphate.

It belongs to the thiamine-phosphate synthase family. Requires Mg(2+) as cofactor.

The catalysed reaction is 2-[(2R,5Z)-2-carboxy-4-methylthiazol-5(2H)-ylidene]ethyl phosphate + 4-amino-2-methyl-5-(diphosphooxymethyl)pyrimidine + 2 H(+) = thiamine phosphate + CO2 + diphosphate. It catalyses the reaction 2-(2-carboxy-4-methylthiazol-5-yl)ethyl phosphate + 4-amino-2-methyl-5-(diphosphooxymethyl)pyrimidine + 2 H(+) = thiamine phosphate + CO2 + diphosphate. It carries out the reaction 4-methyl-5-(2-phosphooxyethyl)-thiazole + 4-amino-2-methyl-5-(diphosphooxymethyl)pyrimidine + H(+) = thiamine phosphate + diphosphate. It functions in the pathway cofactor biosynthesis; thiamine diphosphate biosynthesis; thiamine phosphate from 4-amino-2-methyl-5-diphosphomethylpyrimidine and 4-methyl-5-(2-phosphoethyl)-thiazole: step 1/1. Condenses 4-methyl-5-(beta-hydroxyethyl)thiazole monophosphate (THZ-P) and 2-methyl-4-amino-5-hydroxymethyl pyrimidine pyrophosphate (HMP-PP) to form thiamine monophosphate (TMP). This Solidesulfovibrio magneticus (strain ATCC 700980 / DSM 13731 / RS-1) (Desulfovibrio magneticus) protein is Thiamine-phosphate synthase.